The sequence spans 342 residues: Heparan sulfate glucosamine 3-O-sulfotransferase 6 (342 aa).

Over 1–31 the chain is Cytoplasmic; it reads MAGSGGLGGGAGDLQGAGTGQGTALRALRAP. Residues 32-49 form a helical; Signal-anchor for type II membrane protein membrane-spanning segment; the sequence is LALVVLLLSAYCLFALPG. Residues 50–342 are Lumenal-facing; sequence RCPPAARAPA…QMTGQDFGWD (293 aa). Residues 56–75 form a disordered region; the sequence is RAPAPVPAPAEPPHTSLRLR. 100–104 is a binding site for 3'-phosphoadenylyl sulfate; it reads KGGTR. Residues 122–128 and 153–156 each bind substrate; these read EPHFFDR and KTPS. Positions 181 and 189 each coordinate 3'-phosphoadenylyl sulfate. 220–221 provides a ligand contact to substrate; sequence WS. Asn281 is a glycosylation site (N-linked (GlcNAc...) asparagine). Cys288 and Cys300 are disulfide-bonded. 305–309 contacts 3'-phosphoadenylyl sulfate; sequence KGRPH.

Belongs to the sulfotransferase 1 family. In terms of tissue distribution, expressed in liver and kidney, followed by heart, brain, lung and testis.

Its subcellular location is the golgi apparatus membrane. The enzyme catalyses alpha-D-glucosaminyl-[heparan sulfate](n) + 3'-phosphoadenylyl sulfate = 3-sulfo-alpha-D-glucosaminyl-[heparan sulfate](n) + adenosine 3',5'-bisphosphate + H(+). Its function is as follows. Sulfotransferase that utilizes 3'-phospho-5'-adenylyl sulfate (PAPS) to catalyze the transfer of a sulfo group to heparan sulfate. Unlike 3-OST-1, does not convert non-anticoagulant heparan sulfate to anticoagulant heparan sulfate. This chain is Heparan sulfate glucosamine 3-O-sulfotransferase 6 (Hs3st6), found in Mus musculus (Mouse).